Consider the following 107-residue polypeptide: Replication restart protein PriB (107 aa).

The SSB domain maps to 1–97; sequence MNTLELSARV…LHLQQARRIA (97 aa).

This sequence belongs to the PriB family. Homodimer. Interacts with PriA and DnaT. Component of the replication restart primosome. Primosome assembly occurs via a 'hand-off' mechanism. PriA binds to replication forks, subsequently PriB then DnaT bind; DnaT then displaces ssDNA to generate the helicase loading substrate.

In terms of biological role, involved in the restart of stalled replication forks, which reloads the replicative helicase on sites other than the origin of replication; the PriA-PriB pathway is the major replication restart pathway. During primosome assembly it facilitates complex formation between PriA and DnaT on DNA; stabilizes PriA on DNA. Stimulates the DNA unwinding activity of PriA helicase. This is Replication restart protein PriB from Bordetella parapertussis (strain 12822 / ATCC BAA-587 / NCTC 13253).